A 253-amino-acid chain; its full sequence is uncharacterized protein (253 aa).

The signal sequence occupies residues 1 to 16 (MCVVYRTSVLILLASG). Cys-17 carries N-palmitoyl cysteine lipidation. Cys-17 carries the S-diacylglycerol cysteine lipid modification.

The protein belongs to the staphylococcal tandem lipoprotein family.

It is found in the cell membrane. This is an uncharacterized protein from Staphylococcus aureus (strain N315).